A 122-amino-acid polypeptide reads, in one-letter code: MPGNNHNDRPVALIMSRLSRDPRDCIHHTVDTRGMTPGKIIHQVIPPHPTQMRHTNRPSPPVILNLQILSEGGHVCARDVDTADPVPRAGPERTIQWGTDRDATEELASPAPEEIYEDNDSW.

The disordered stretch occupies residues 80–122 (VDTADPVPRAGPERTIQWGTDRDATEELASPAPEEIYEDNDSW).

It belongs to the novirhabdovirus NV protein family.

Functionally, plays an essential role for the viral pathogenicity. The sequence is that of Non-virion protein (NV) from Gobiosoma bosc (Naked goby).